The following is a 324-amino-acid chain: Taste receptor type 2 member 116 (324 aa).

At 1–2 the chain is on the extracellular side; the sequence is MN. Residues 3-23 traverse the membrane as a helical segment; the sequence is GVLYITFTVILSVEVIIGNFG. Residues 24 to 55 are Cytoplasmic-facing; that stretch reads NGIIALVNIMDLAKRRKISSVDQILTALAISR. The helical transmembrane segment at 56–76 threads the bilayer; the sequence is IVLLWLVLVSWWLSMFYPGQW. Residues 77 to 94 lie on the Extracellular side of the membrane; sequence MTEGIDVIVHNVWTTLNQ. A helical transmembrane segment spans residues 95 to 115; sequence ISLWLATSFSVFCFLKVANFS. Residues 116 to 128 lie on the Cytoplasmic side of the membrane; it reads NTIFFYLKIRVKK. Residues 129 to 149 form a helical membrane-spanning segment; the sequence is VMTGTLIMFLLLLGLNIIVIN. Residues 150–183 lie on the Extracellular side of the membrane; that stretch reads ASKTILIPEYKVNMSNSLNLKNTQISMLFPFANT. N-linked (GlcNAc...) asparagine glycosylation is present at Asn-162. Residues 184–204 form a helical membrane-spanning segment; that stretch reads LFGFIPFAVSLVTFLLLFFSL. Topologically, residues 205 to 236 are cytoplasmic; it reads WKHQRKMHHGAQGCRDSSTKAHIRVLQTLIAS. A helical transmembrane segment spans residues 237–257; sequence ILLYFVFFLSLVVKVWISLFL. The Extracellular portion of the chain corresponds to 258–261; sequence ERML. The helical transmembrane segment at 262 to 282 threads the bilayer; the sequence is LLLITQAAKIAFPSLHPWVLI. Residues 283–324 lie on the Cytoplasmic side of the membrane; it reads LGNAKLRKASLSALQWLRCRHKDEHRRVQRPEVHSCGSSCMP.

It belongs to the G-protein coupled receptor T2R family.

It is found in the membrane. Its function is as follows. Putative taste receptor which may play a role in the perception of bitterness. The protein is Taste receptor type 2 member 116 of Rattus norvegicus (Rat).